Consider the following 180-residue polypeptide: Ribulose bisphosphate carboxylase small subunit, chloroplastic (180 aa).

A chloroplast-targeting transit peptide spans 1 to 56 (MALISSAAVTTVNRASSAQANLVAPFTGLKSSAGFPVTKKTNNDITSIASNGGRVN).

Belongs to the RuBisCO small chain family. In terms of assembly, heterohexadecamer of 8 large and 8 small subunits.

Its subcellular location is the plastid. The protein resides in the chloroplast. RuBisCO catalyzes two reactions: the carboxylation of D-ribulose 1,5-bisphosphate, the primary event in carbon dioxide fixation, as well as the oxidative fragmentation of the pentose substrate. Both reactions occur simultaneously and in competition at the same active site. Although the small subunit is not catalytic it is essential for maximal activity. This chain is Ribulose bisphosphate carboxylase small subunit, chloroplastic, found in Medicago sativa (Alfalfa).